A 663-amino-acid polypeptide reads, in one-letter code: (R)-specific secondary-alkylsulfatase (663 aa).

Residues M1–A28 form the signal peptide. Residues H179, H181, D183, and H184 each contribute to the Zn(2+) site. Residue Q232 coordinates sulfate. Zn(2+)-binding residues include E291 and D310. Sulfate contacts are provided by residues N318 to R323 and R328. H355 lines the Zn(2+) pocket. Position 417 (Y417) interacts with sulfate.

The protein belongs to the metallo-beta-lactamase superfamily. Type III sulfatase family. Homodimer.

The enzyme catalyses an (R)-secondary-alkyl sulfate + H2O = an (S)-secondary-alcohol + sulfate.. Its function is as follows. Alkylsulfatase that catalyzes the enantioselective hydrolysis of secondary-alkylsulfates with strict inversion of configuration, leading to the formation of homochiral (S)-configurated alcohols and nonreacted sulfate esters. The substrate spectrum includes a range of linear, branched or cyclic sec-alkylsulfates. Can use sec-alkylsulfate esters bearing aromatic, olefinic and acetylenic moieties. Acts by cleaving the C-O bond, resulting in inversion at the carbon. This chain is (R)-specific secondary-alkylsulfatase, found in Pseudomonas sp.